Consider the following 617-residue polypeptide: BPI fold-containing family B member 4 (617 aa).

The first 17 residues, 1 to 17 (MWTAWCVAALSVAAVCG), serve as a signal peptide directing secretion. Residues 124–149 (RPSDSAYHRGPGRYRSAADPSSAGRL) are disordered. Asparagine 275 carries an N-linked (GlcNAc...) asparagine glycan. Cysteine 297 and cysteine 334 are oxidised to a cystine.

It belongs to the BPI/LBP/Plunc superfamily. BPI/LBP family. As to expression, highly expressed in olfactory mucosa but undetectable in thymus, kidney, lung, brain, spleen and liver.

Its subcellular location is the secreted. It is found in the cytoplasm. May have the capacity to recognize and bind specific classes of odorants. May act as a carrier molecule, transporting odorants across the mucus layer to access receptor sites. May serve as a primary defense mechanism by recognizing and removing potentially harmful odorants or pathogenic microorganisms from the mucosa or clearing excess odorant from mucus to enable new odorant stimuli to be received. This chain is BPI fold-containing family B member 4 (Bpifb4), found in Rattus norvegicus (Rat).